Here is a 49-residue protein sequence, read N- to C-terminus: Large ribosomal subunit protein eL40 (49 aa).

The protein belongs to the eukaryotic ribosomal protein eL40 family.

The protein is Large ribosomal subunit protein eL40 of Methanosarcina barkeri (strain Fusaro / DSM 804).